A 98-amino-acid polypeptide reads, in one-letter code: Protein FAM24A (98 aa).

An N-terminal signal peptide occupies residues 1 to 29 (MFDLRTKVMIGIASTLLIAAIMLITLVFC).

Belongs to the FAM24 family.

It localises to the secreted. In Mus musculus (Mouse), this protein is Protein FAM24A (Fam24a).